A 356-amino-acid chain; its full sequence is PEP-dependent dihydroxyacetone kinase, dihydroxyacetone-binding subunit DhaK (356 aa).

The DhaK domain occupies 7-352 (DVQDVLDEQL…WDAPVHTPAL (346 aa)). Dihydroxyacetone is bound by residues 53–56 (GSGH), Lys104, and Asp109. The Proton acceptor role is filled by His56. His218 functions as the Tele-hemiaminal-histidine intermediate in the catalytic mechanism.

In terms of assembly, homodimer. The dihydroxyacetone kinase complex is composed of a homodimer of DhaM, a homodimer of DhaK and the subunit DhaL. DhaL also forms a complex with DhaR.

It carries out the reaction dihydroxyacetone + phosphoenolpyruvate = dihydroxyacetone phosphate + pyruvate. The protein operates within polyol metabolism; glycerol degradation. Its activity is regulated as follows. Inhibited by chloro-3-hydroxyacetone and D,L-glyceraldehyde. Dihydroxyacetone binding subunit of the dihydroxyacetone kinase, which is responsible for the phosphoenolpyruvate (PEP)-dependent phosphorylation of dihydroxyacetone via a phosphoryl group transfer from DhaL-ATP. Binds covalently dihydroxyacetone in hemiaminal linkage. DhaK also acts as corepressor of the transcription activator DhaR by binding to the sensor domain of DhaR. In the presence of dihydroxyacetone, DhaL-ADP displaces DhaK and stimulates DhaR activity. In the absence of dihydroxyacetone, DhaL-ADP is converted by the PTS to DhaL-ATP, which does not bind to DhaR. The chain is PEP-dependent dihydroxyacetone kinase, dihydroxyacetone-binding subunit DhaK from Escherichia coli (strain K12).